The following is a 357-amino-acid chain: Peptide chain release factor 1 (357 aa).

N5-methylglutamine is present on glutamine 236.

It belongs to the prokaryotic/mitochondrial release factor family. In terms of processing, methylated by PrmC. Methylation increases the termination efficiency of RF1.

The protein resides in the cytoplasm. In terms of biological role, peptide chain release factor 1 directs the termination of translation in response to the peptide chain termination codons UAG and UAA. This is Peptide chain release factor 1 from Mycobacterium sp. (strain JLS).